We begin with the raw amino-acid sequence, 483 residues long: Membrane-bound lytic murein transglycosylase F (483 aa).

Positions 1–18 are cleaved as a signal peptide; it reads MKGLIARFIAGFALLLWA. The non-LT domain stretch occupies residues 19–267; the sequence is WDMVFPWQQL…RIEEKYFNHL (249 aa). Residues 269–483 are LT domain; the sequence is HFDYVDIQSY…SKESDSTLKE (215 aa). The active site involves E312. Residues 458-483 are disordered; sequence QQIQNNEEQPSVPQEISKESDSTLKE. The segment covering 473–483 has biased composition (basic and acidic residues); that stretch reads ISKESDSTLKE.

The protein in the N-terminal section; belongs to the bacterial solute-binding protein 3 family. In the C-terminal section; belongs to the transglycosylase Slt family.

It localises to the cell outer membrane. It carries out the reaction Exolytic cleavage of the (1-&gt;4)-beta-glycosidic linkage between N-acetylmuramic acid (MurNAc) and N-acetylglucosamine (GlcNAc) residues in peptidoglycan, from either the reducing or the non-reducing ends of the peptidoglycan chains, with concomitant formation of a 1,6-anhydrobond in the MurNAc residue.. Its function is as follows. Murein-degrading enzyme that degrades murein glycan strands and insoluble, high-molecular weight murein sacculi, with the concomitant formation of a 1,6-anhydromuramoyl product. Lytic transglycosylases (LTs) play an integral role in the metabolism of the peptidoglycan (PG) sacculus. Their lytic action creates space within the PG sacculus to allow for its expansion as well as for the insertion of various structures such as secretion systems and flagella. This chain is Membrane-bound lytic murein transglycosylase F, found in Actinobacillus pleuropneumoniae serotype 5b (strain L20).